Reading from the N-terminus, the 207-residue chain is ATP synthase subunit b (207 aa).

Positions 1–27 (MKLRATFVFKTTLVALSFALFALFLVS) are cleaved as a signal peptide. C28 is lipidated: N-palmitoyl cysteine. Residue C28 is the site of S-diacylglycerol cysteine attachment. A helical membrane pass occupies residues 49–69 (WVFLAHLLAFVILLFLLLFLF).

It belongs to the ATPase B chain family. As to quaternary structure, F-type ATPases have 2 components, F(1) - the catalytic core - and F(0) - the membrane proton channel. F(1) has five subunits: alpha(3), beta(3), gamma(1), delta(1), epsilon(1). F(0) has three main subunits: a(1), b(2) and c(10-14). The alpha and beta chains form an alternating ring which encloses part of the gamma chain. F(1) is attached to F(0) by a central stalk formed by the gamma and epsilon chains, while a peripheral stalk is formed by the delta and b chains.

It is found in the cell membrane. F(1)F(0) ATP synthase produces ATP from ADP in the presence of a proton or sodium gradient. F-type ATPases consist of two structural domains, F(1) containing the extramembraneous catalytic core and F(0) containing the membrane proton channel, linked together by a central stalk and a peripheral stalk. During catalysis, ATP synthesis in the catalytic domain of F(1) is coupled via a rotary mechanism of the central stalk subunits to proton translocation. Its function is as follows. Component of the F(0) channel, it forms part of the peripheral stalk, linking F(1) to F(0). The protein is ATP synthase subunit b of Mycoplasma pneumoniae (strain ATCC 29342 / M129 / Subtype 1) (Mycoplasmoides pneumoniae).